The primary structure comprises 620 residues: Probable protein arginine N-methyltransferase 3 (620 aa).

Over residues 1–17 (MATREHELRPEQERLGE) the composition is skewed to basic and acidic residues. The tract at residues 1 to 45 (MATREHELRPEQERLGEDREEYEDGEEEEEEGEEGWDDWESDGDD) is disordered. Residues 18–45 (DREEYEDGEEEEEEGEEGWDDWESDGDD) show a composition bias toward acidic residues. The C2H2-type 1 zinc finger occupies 55–78 (LLCLFCSARFDSESSLFSHCASEH). Residues 110–137 (NKCWSCGQVFSSNSELCGHLHALEIPQL) form a C2H2-type 2; degenerate zinc finger. The 330-residue stretch at 253-582 (DESYFGSYSS…DECPAVMIRS (330 aa)) folds into the SAM-dependent MTase PRMT-type domain. 5 residues coordinate S-adenosyl-L-homocysteine: Arg275, Gly299, Asp321, Ser323, and Glu364. Catalysis depends on residues Glu383 and Glu392.

This sequence belongs to the class I-like SAM-binding methyltransferase superfamily. Protein arginine N-methyltransferase family.

It localises to the cytoplasm. The protein resides in the cytosol. The enzyme catalyses L-arginyl-[protein] + S-adenosyl-L-methionine = N(omega)-methyl-L-arginyl-[protein] + S-adenosyl-L-homocysteine + H(+). It catalyses the reaction L-arginyl-[protein] + 2 S-adenosyl-L-methionine = N(omega),N(omega)-dimethyl-L-arginyl-[protein] + 2 S-adenosyl-L-homocysteine + 2 H(+). In terms of biological role, protein-arginine N-methyltransferase that catalyzes both the monomethylation and asymmetric dimethylation of the guanidino nitrogens of arginine residues in target proteins, and therefore falls into the group of type I methyltransferases. This Oryza sativa subsp. japonica (Rice) protein is Probable protein arginine N-methyltransferase 3 (PRMT3).